Here is a 1241-residue protein sequence, read N- to C-terminus: ATP-dependent helicase/nuclease subunit A (1241 aa).

One can recognise a UvrD-like helicase ATP-binding domain in the interval 12–485 (SQWTDDQWKA…IDLAKNFRSR (474 aa)). 33 to 40 (AAAGSGKT) contributes to the ATP binding site. The UvrD-like helicase C-terminal domain occupies 505 to 805 (GEIDYDADAE…RIMTIHKSKG (301 aa)).

Belongs to the helicase family. AddA subfamily. As to quaternary structure, heterodimer of AddA and AddB/RexB. Mg(2+) is required as a cofactor.

It carries out the reaction Couples ATP hydrolysis with the unwinding of duplex DNA by translocating in the 3'-5' direction.. The enzyme catalyses ATP + H2O = ADP + phosphate + H(+). In terms of biological role, the heterodimer acts as both an ATP-dependent DNA helicase and an ATP-dependent, dual-direction single-stranded exonuclease. Recognizes the chi site generating a DNA molecule suitable for the initiation of homologous recombination. The AddA nuclease domain is required for chi fragment generation; this subunit has the helicase and 3' -&gt; 5' nuclease activities. This is ATP-dependent helicase/nuclease subunit A from Bacillus cereus (strain ZK / E33L).